Reading from the N-terminus, the 146-residue chain is MKLHELKPAKGSRKVRNRVGRGTSSGNGKTSGRGQKGQKARSGGGVRLGFEGGQTPLFRRIPKRGFTNINTKEYALVNLDQLNAFEDGTEVTPVVLKEAGIVRAEKSGVKILGNGELTKKLTVKAAKFSKSAEAAITAKGGSIEVI.

The segment at Met1–Glu51 is disordered. A compositionally biased stretch (basic residues) spans Lys10–Val19. Gly residues-rich tracts occupy residues Thr23 to Gln35 and Ser42 to Glu51.

It belongs to the universal ribosomal protein uL15 family. In terms of assembly, part of the 50S ribosomal subunit.

In terms of biological role, binds to the 23S rRNA. This Streptococcus equi subsp. equi (strain 4047) protein is Large ribosomal subunit protein uL15.